The sequence spans 481 residues: MRQRTTIYNPYSSHDGIITNLNRTNFQLSSIPNHLFTIENKYTITTTTTQPNKSSLYSAIKELRIQTKFNNNESGIPIFSFHYEPGLNIYAVPQSNVDKLEFWQQVEQLIMELLGIKLSSQQWIANVNSFYYHDIQPQPLLNLKEGWKFNLHPKSNYDYIYNQDKIIIRELLTNVSEIEFNLESGIYKEIGLFLIDEKISTNDDLNLSGIRVILDEDSNTNNKEESIHKTMFHIKPRHRSFDDSTTITTTKIIPQGLHPILSTELNTTTIVIPTDFDVEECKFYYYLNLNKSLIFDQFQNIPIGSQLIINNGNKNLELPEYKINQWGNELLFEFEFDNDNDIPHHINLTVHSRYQLPQNNHSHSQISNVLNSLPNIFIGCNVKEGNLLDKSPFDTKRDVKIGGNYEIYFTEDTVFYHLQNSDNSGNSGSSTLLEINIPHGKTTFDRVNNITSLGLLIGVLMILYAISIRVFMSTTSKTKRD.

Topologically, residues 1 to 451 are lumenal; it reads MRQRTTIYNP…TTFDRVNNIT (451 aa). Asn-22, Asn-52, Asn-72, Asn-174, Asn-206, Asn-266, Asn-290, Asn-347, Asn-360, and Asn-449 each carry an N-linked (GlcNAc...) asparagine glycan. A helical transmembrane segment spans residues 452–472; sequence SLGLLIGVLMILYAISIRVFM. At 473–481 the chain is on the cytoplasmic side; the sequence is STTSKTKRD.

The protein belongs to the PIGX family.

Its subcellular location is the endoplasmic reticulum membrane. It participates in glycolipid biosynthesis; glycosylphosphatidylinositol-anchor biosynthesis. Its function is as follows. Required for proper folding and/or the stability of a subset of proteins in the endoplasmic reticulum. Component of glycosylphosphatidylinositol-mannosyltransferase 1 which transfers the first of the 4 mannoses in the GPI-anchor precursors during GPI-anchor biosynthesis. Probably acts by stabilizing the mannosyltransferase GPI14. The chain is Protein PBN1 (PBN1) from Candida albicans (strain SC5314 / ATCC MYA-2876) (Yeast).